The primary structure comprises 371 residues: uncharacterized protein (371 aa).

This sequence belongs to the serpin family.

This is an uncharacterized protein from Pyrobaculum aerophilum (strain ATCC 51768 / DSM 7523 / JCM 9630 / CIP 104966 / NBRC 100827 / IM2).